Consider the following 177-residue polypeptide: Peptidyl-prolyl cis-trans isomerase H (177 aa).

A2 carries the N-acetylalanine modification. Residues 14 to 176 (FFDVSIGGQE…LPVVISQCGE (163 aa)) form the PPIase cyclophilin-type domain.

It belongs to the cyclophilin-type PPIase family. PPIase H subfamily. As to quaternary structure, interacts directly with PRPF4. Part of a heteromeric complex containing PPIH, PRPF3 and PRPF4 that is stable in the absence of RNA. Component of the U4/U6-U5 tri-snRNP complex composed of the U4, U6 and U5 snRNAs and at least PRPF3, PRPF4, PRPF6, PRPF8, PRPF31, SNRNP200, TXNL4A, SNRNP40, DDX23, CD2BP2, PPIH, SNU13, EFTUD2, SART1 and USP39. Heterodimer with PRPF18.

It is found in the nucleus speckle. Its subcellular location is the cytoplasm. The enzyme catalyses [protein]-peptidylproline (omega=180) = [protein]-peptidylproline (omega=0). Its activity is regulated as follows. Inhibited by cyclosporin A. PPIase that catalyzes the cis-trans isomerization of proline imidic peptide bonds in oligopeptides and may therefore assist protein folding. Participates in pre-mRNA splicing. May play a role in the assembly of the U4/U5/U6 tri-snRNP complex, one of the building blocks of the spliceosome. May act as a chaperone. This Homo sapiens (Human) protein is Peptidyl-prolyl cis-trans isomerase H (PPIH).